The primary structure comprises 91 residues: Glycophorin-B (91 aa).

Residues 1-19 (MYGKIIFVLLLSEIVSISA) form the signal peptide. Residues 20–59 (LSTTEVAMHTSTSSSVTKSYISSQTNGETGQLVHRFTVPA) are Extracellular-facing. T36 is a glycosylation site (O-linked (GalNAc...) threonine). A glycan (O-linked (GalNAc...) serine) is linked at S38. Residues 60–81 (PVVIILIILCVMAGIIGTILLI) traverse the membrane as a helical segment. Topologically, residues 82-91 (SYSIRRLIKA) are cytoplasmic.

This sequence belongs to the glycophorin-A family. As to quaternary structure, component of the ankyrin-1 complex in the erythrocyte, composed of ANK1, RHCE, RHAG, SLC4A1, EPB42, GYPA, GYPB and AQP1. Interacts (via the N-terminal) with RHAG; this interaction bridges the (RHAG)2(RHCE) heterotrimer with the SLC4A1 Band 3 I dimer complexed with GYPA. The N-terminal extracellular domain is heavily glycosylated on serine and threonine residues.

The protein localises to the cell membrane. Component of the ankyrin-1 complex, a multiprotein complex involved in the stability and shape of the erythrocyte membrane. This is Glycophorin-B from Homo sapiens (Human).